Reading from the N-terminus, the 150-residue chain is UPF0756 membrane protein HAPS_1649 (150 aa).

Helical transmembrane passes span 1–21 (MSLQ…LGIF), 27–46 (VTIS…SKYV), 52–72 (YGIK…LVSG), 82–102 (LINW…WLGG), and 123–143 (IIGV…AGIL).

This sequence belongs to the UPF0756 family.

The protein localises to the cell membrane. The sequence is that of UPF0756 membrane protein HAPS_1649 from Glaesserella parasuis serovar 5 (strain SH0165) (Haemophilus parasuis).